The sequence spans 259 residues: UPF0246 protein PST_1170 (259 aa).

It belongs to the UPF0246 family.

In Stutzerimonas stutzeri (strain A1501) (Pseudomonas stutzeri), this protein is UPF0246 protein PST_1170.